Reading from the N-terminus, the 670-residue chain is tRNA 5-methylaminomethyl-2-thiouridine biosynthesis bifunctional protein MnmC (670 aa).

The tRNA (mnm(5)s(2)U34)-methyltransferase stretch occupies residues 1–242 (MTFSVQHAEI…KRECLSGLKI (242 aa)). The tract at residues 269 to 670 (IGGGIASFCA…KKWLKGSKVE (402 aa)) is FAD-dependent cmnm(5)s(2)U34 oxidoreductase.

This sequence in the N-terminal section; belongs to the methyltransferase superfamily. tRNA (mnm(5)s(2)U34)-methyltransferase family. It in the C-terminal section; belongs to the DAO family. It depends on FAD as a cofactor.

Its subcellular location is the cytoplasm. It catalyses the reaction 5-aminomethyl-2-thiouridine(34) in tRNA + S-adenosyl-L-methionine = 5-methylaminomethyl-2-thiouridine(34) in tRNA + S-adenosyl-L-homocysteine + H(+). Functionally, catalyzes the last two steps in the biosynthesis of 5-methylaminomethyl-2-thiouridine (mnm(5)s(2)U) at the wobble position (U34) in tRNA. Catalyzes the FAD-dependent demodification of cmnm(5)s(2)U34 to nm(5)s(2)U34, followed by the transfer of a methyl group from S-adenosyl-L-methionine to nm(5)s(2)U34, to form mnm(5)s(2)U34. This is tRNA 5-methylaminomethyl-2-thiouridine biosynthesis bifunctional protein MnmC from Haemophilus influenzae (strain 86-028NP).